A 411-amino-acid chain; its full sequence is Lissencephaly-1 homolog (411 aa).

The LisH domain maps to 9–41 (QREELNQAIADYLGTNGYADSLEAFRKEADLST). Residues 56–83 (TSVIRLQKKVMELEAKLTEAEKEVIEGA) adopt a coiled-coil conformation. WD repeat units follow at residues 106–147 (GHRA…RTLK), 148–187 (GHTDSVQDVAFDAQGKLLVSCSADLSIKLWDFQQSYECVK), 191–230 (GHDHNVSSVAFVPAGDYVLSASRDRTIKMWEVATGYCVKT), 233–272 (GHREWVRMVRVHIEGSIFATCSNDHTIRVWLTNSKDCKVE), 275–334 (DHEH…CLLT), 337–376 (GHDNWVRGLAFHPGGKYLVSASDDKTIRVWDLRNKRCMKT), and 379–411 (AHQHFCTSIDFHKAHPYVISGSVDQTVKVWECR).

The protein belongs to the WD repeat LIS1/nudF family.

It is found in the cytoplasm. The protein localises to the cytoskeleton. The protein resides in the microtubule organizing center. It localises to the centrosome. Functionally, positively regulates the activity of the minus-end directed microtubule motor protein dynein. May enhance dynein-mediated microtubule sliding by targeting dynein to the microtubule plus end. Required for several dynein- and microtubule-dependent processes. This chain is Lissencephaly-1 homolog, found in Drosophila grimshawi (Hawaiian fruit fly).